Consider the following 86-residue polypeptide: Large ribosomal subunit protein bL27 (86 aa).

A disordered region spans residues 1–23 (MAHKKGTGSTRNGRDSNSKRLGV).

This sequence belongs to the bacterial ribosomal protein bL27 family.

This chain is Large ribosomal subunit protein bL27, found in Prochlorococcus marinus (strain MIT 9515).